Here is a 147-residue protein sequence, read N- to C-terminus: Leghemoglobin 3 (147 aa).

In terms of domain architecture, Globin spans 2-147 (GFTAQQEALV…LATAIKKAMG (146 aa)). Position 30 is a nitrated tyrosine (tyrosine 30). Serine 45 lines the heme b pocket. The residue at position 45 (serine 45) is a Phosphoserine. Histidine 61 provides a ligand contact to O2. Heme b contacts are provided by lysine 64, histidine 93, and lysine 96. The residue at position 135 (tyrosine 135) is a Nitrated tyrosine.

It belongs to the plant globin family. As to quaternary structure, monomer. Post-translationally, nitrated in effective nodules and particularly in hypoxic conditions; this mechanism may play a protective role in the symbiosis by buffering toxic peroxynitrite NO(2)(-). Nitration level decrease during nodule senescence. Phosphorylation at Ser-45 disrupts the molecular environment of its porphyrin ring oxygen binding pocket, thus leading to a reduced oxygen consumption and to the delivery of oxygen O(2) to symbiosomes. Specifically and strongly expressed in root nodules and at low levels in seedlings.

The protein localises to the cytoplasm. The protein resides in the cytosol. It localises to the nucleus. Functionally, leghemoglobin that reversibly binds oxygen O(2) through a pentacoordinated heme iron. In root nodules, facilitates the diffusion of oxygen to the bacteroids while preventing the bacterial nitrogenase from being inactivated by buffering dioxygen, nitric oxide and carbon monoxide, and promoting the formation of reactive oxygen species (ROS, e.g. H(2)O(2)). This role is essential for symbiotic nitrogen fixation (SNF). In Lotus japonicus (Lotus corniculatus var. japonicus), this protein is Leghemoglobin 3.